A 445-amino-acid chain; its full sequence is GRAM domain-containing protein 2B (445 aa).

The residue at position 1 (M1) is an N-acetylmethionine. The segment covering 1–10 has biased composition (polar residues); that stretch reads MVKKPISSSD. The segment at 1–119 is disordered; the sequence is MVKKPISSSD…RKKSSSSSQY (119 aa). Residues 18–37 are compositionally biased toward low complexity; it reads PSSPKSSAGASHSSTDSPSS. Composition is skewed to polar residues over residues 56 to 68 and 82 to 93; these read KSPT…SSVE and SKSSFDGSNLLS. The segment covering 94–112 has biased composition (basic and acidic residues); that stretch reads DKNDCKTESKADSKTERKK. Residues 123-190 form the GRAM domain; the sequence is MHFHKLFLDV…FSVTLIKKTK (68 aa). A phosphoserine mark is found at S238, S255, and S265. Residues 277–331 are disordered; it reads DLEGYSSSGSQTPESENSRDFHVTESQTVLNVTKGETKPPRTDAHGSRAPDGKAK. Residues 281-291 show a composition bias toward polar residues; the sequence is YSSSGSQTPES. The span at 311–330 shows a compositional bias: basic and acidic residues; it reads GETKPPRTDAHGSRAPDGKA.

The chain is GRAM domain-containing protein 2B (Gramd2b) from Rattus norvegicus (Rat).